We begin with the raw amino-acid sequence, 176 residues long: N,N-dimethyl phenylurea N-demethylase subunit beta (176 aa).

This sequence belongs to the bacterial ring-hydroxylating dioxygenase beta subunit family. PdmA (subunit alpha) and PdmB (subunit beta) form the oxygenase component of a bacterial Rieske non-heme iron oxygenase (RO) system.

The catalysed reaction is a 1,1-dimethyl-3-phenylurea + 2 reduced [2Fe-2S]-[ferredoxin] + O2 + 2 H(+) = a 1-methyl-3-phenylurea + formaldehyde + 2 oxidized [2Fe-2S]-[ferredoxin] + H2O. It catalyses the reaction isoproturon + 2 reduced [2Fe-2S]-[ferredoxin] + O2 + 2 H(+) = 1-methyl-3-[4-(propan-2-yl)phenyl]urea + formaldehyde + 2 oxidized [2Fe-2S]-[ferredoxin] + H2O. The enzyme catalyses chlorotoluron + 2 reduced [2Fe-2S]-[ferredoxin] + O2 + 2 H(+) = 3-(3-chloro-4-methylphenyl)-1-methylurea + formaldehyde + 2 oxidized [2Fe-2S]-[ferredoxin] + H2O. It carries out the reaction metoxuron + 2 reduced [2Fe-2S]-[ferredoxin] + O2 + 2 H(+) = 3-(3-chloro-4-methoxylphenyl)-1-methylurea + formaldehyde + 2 oxidized [2Fe-2S]-[ferredoxin] + H2O. The catalysed reaction is monuron + 2 reduced [2Fe-2S]-[ferredoxin] + O2 + 2 H(+) = 3-(4-chlorophenyl)-1-methylurea + formaldehyde + 2 oxidized [2Fe-2S]-[ferredoxin] + H2O. It catalyses the reaction diuron + 2 reduced [2Fe-2S]-[ferredoxin] + O2 + 2 H(+) = 3-(3,4-dichlorophenyl)-1-methylurea + formaldehyde + 2 oxidized [2Fe-2S]-[ferredoxin] + H2O. The enzyme catalyses fluometuron + 2 reduced [2Fe-2S]-[ferredoxin] + O2 + 2 H(+) = 3-[3-(trifluoromethyl)phenyl]-1-methylurea + formaldehyde + 2 oxidized [2Fe-2S]-[ferredoxin] + H2O. It carries out the reaction fenuron + 2 reduced [2Fe-2S]-[ferredoxin] + O2 + 2 H(+) = 1-methyl-3-phenylurea + formaldehyde + 2 oxidized [2Fe-2S]-[ferredoxin] + H2O. The protein operates within xenobiotic degradation. With respect to regulation, activity is stimulated in vitro by coexpression of a [3Fe-4S]-type ferredoxin. Functionally, part of the multicomponent N,N-dimethyl phenylurea N-demethylase responsible for the initial N-demethylation step during the bacterial metabolism of N,N-dimethyl-substituted phenylurea herbicides. Catalyzes the mono-N-demethylation of N,N-dimethyl-substituted phenylurea herbicides to their mono-N-demethylated derivatives. Is active on isoproturon (IPU), chlorotoluron, metoxuron, monoron, diuron, fluometuron and fenuron, but cannot transform the N-methoxy-N-methyl-substituted herbicides. This chain is N,N-dimethyl phenylurea N-demethylase subunit beta, found in Sphingobium sp. (strain YBL2).